Here is a 477-residue protein sequence, read N- to C-terminus: UDP-sulfoquinovose synthase, chloroplastic (477 aa).

The disordered stretch occupies residues 1–21 (MAHLLSASCPSVISLSSSSSK). The N-terminal 86 residues, 1–86 (MAHLLSASCP…TNNSSSKPKR (86 aa)), are a transit peptide targeting the chloroplast. NAD(+)-binding positions include 95–96 (YC), 115–119 (DNLVR), 158–159 (DI), R184, and N202. R184 provides a ligand contact to substrate. Substrate is bound by residues T228 and Y265. T228 is a catalytic residue. NAD(+) is bound by residues Y265 and K269. Residue Y265 is the Proton acceptor of the active site. The active site involves K269. Residue Q292 participates in substrate binding. V295 is an NAD(+) binding site. Substrate is bound by residues 322 to 325 (ALNR), 337 to 339 (TVY), and 410 to 412 (RVE).

The protein belongs to the NAD(P)-dependent epimerase/dehydratase family. Homodimer. It depends on NAD(+) as a cofactor.

The protein localises to the plastid. It is found in the chloroplast. It carries out the reaction sulfite + UDP-alpha-D-glucose + H(+) = UDP-alpha-D-6-sulfoquinovose + H2O. Concentrations above 100 uM sulfite inhibit the reaction. Its function is as follows. Involved in the biosynthesis of sulfolipids found in thylakoid membranes. Converts UDP-glucose and sulfite to the sulfolipid head group precursor UDP-sulfoquinovose. In Arabidopsis thaliana (Mouse-ear cress), this protein is UDP-sulfoquinovose synthase, chloroplastic (SQD1).